The following is a 633-amino-acid chain: Keratin, type II cytoskeletal 2 epidermal (633 aa).

The interval 1 to 189 is head; that stretch reads MSCQISCKSR…DPEIQNVKSQ (189 aa). Arginine 18 carries the asymmetric dimethylarginine modification. Phosphoserine is present on residues serine 21, serine 24, and serine 60. The coil 1A stretch occupies residues 190–225; sequence EREQIKTLNNKFASFIDKVRFLEQQNQVLQTKWELL. In terms of domain architecture, IF rod spans 190 to 503; sequence EREQIKTLNN…KLLEGEECRM (314 aa). The segment at 226 to 244 is linker 1; sequence QQLDVSTRTTNLEPIFQAY. The coil 1B stretch occupies residues 245-336; the sequence is IAKLKKYVDT…FLFDXELSQM (92 aa). The segment at 337–360 is linker 12; sequence QTQISETNVTLSMDNNRSLDLDSI. Residues 361-499 are coil 2; sequence ISEVKAQYEE…ATYRKLLEGE (139 aa). Positions 500–633 are tail; it reads ECRMSGDLSS…SGSSVTFSFR (134 aa). Over residues 518 to 527 the composition is skewed to low complexity; the sequence is SSMSSSMTSR. Residues 518–633 form a disordered region; that stretch reads SSMSSSMTSR…SGSSVTFSFR (116 aa). Positions 528 to 613 are enriched in gly residues; sequence GGFGGYGSGG…GYGSGGGSRG (86 aa). 2 positions are modified to omega-N-methylarginine: arginine 588 and arginine 612.

Belongs to the intermediate filament family. As to quaternary structure, heterotetramer of two type I and two type II keratins. Associates with KRT10.

It is found in the cytoplasm. Probably contributes to terminal cornification. Associated with keratinocyte activation, proliferation and keratinization. Required for maintenance of corneocytes and keratin filaments in suprabasal keratinocytes in the epidermis of the ear, potentially via moderation of expression and localization of keratins and their partner proteins. Plays a role in the establishment of the epidermal barrier on plantar skin. The protein is Keratin, type II cytoskeletal 2 epidermal (KRT2) of Canis lupus familiaris (Dog).